Consider the following 270-residue polypeptide: Putative phosphoenolpyruvate synthase regulatory protein (270 aa).

150-157 contacts ADP; the sequence is GVSRCGKT.

It belongs to the pyruvate, phosphate/water dikinase regulatory protein family. PSRP subfamily.

It catalyses the reaction [pyruvate, water dikinase] + ADP = [pyruvate, water dikinase]-phosphate + AMP + H(+). It carries out the reaction [pyruvate, water dikinase]-phosphate + phosphate + H(+) = [pyruvate, water dikinase] + diphosphate. In terms of biological role, bifunctional serine/threonine kinase and phosphorylase involved in the regulation of the phosphoenolpyruvate synthase (PEPS) by catalyzing its phosphorylation/dephosphorylation. This chain is Putative phosphoenolpyruvate synthase regulatory protein, found in Shewanella denitrificans (strain OS217 / ATCC BAA-1090 / DSM 15013).